The following is a 349-amino-acid chain: Anthranilate phosphoribosyltransferase (349 aa).

Residues Gly-86, 89–90 (GD), Thr-94, 96–99 (NIST), 114–122 (KHGNKSASG), and Ser-126 each bind 5-phospho-alpha-D-ribose 1-diphosphate. Position 86 (Gly-86) interacts with anthranilate. A Mg(2+)-binding site is contributed by Ser-98. Asn-117 is a binding site for anthranilate. Residue Arg-172 coordinates anthranilate. Mg(2+) is bound by residues Asp-231 and Glu-232.

This sequence belongs to the anthranilate phosphoribosyltransferase family. Homodimer. It depends on Mg(2+) as a cofactor.

The enzyme catalyses N-(5-phospho-beta-D-ribosyl)anthranilate + diphosphate = 5-phospho-alpha-D-ribose 1-diphosphate + anthranilate. It functions in the pathway amino-acid biosynthesis; L-tryptophan biosynthesis; L-tryptophan from chorismate: step 2/5. Catalyzes the transfer of the phosphoribosyl group of 5-phosphorylribose-1-pyrophosphate (PRPP) to anthranilate to yield N-(5'-phosphoribosyl)-anthranilate (PRA). This is Anthranilate phosphoribosyltransferase from Prochlorococcus marinus (strain MIT 9312).